Here is a 242-residue protein sequence, read N- to C-terminus: Orotidine 5'-phosphate decarboxylase (242 aa).

Residues aspartate 22, lysine 44, 71-80, threonine 130, arginine 190, glutamine 199, glycine 219, and arginine 220 contribute to the substrate site; that span reads DLKYHDIPNT. Lysine 73 (proton donor) is an active-site residue.

This sequence belongs to the OMP decarboxylase family. Type 1 subfamily. As to quaternary structure, homodimer.

The catalysed reaction is orotidine 5'-phosphate + H(+) = UMP + CO2. It functions in the pathway pyrimidine metabolism; UMP biosynthesis via de novo pathway; UMP from orotate: step 2/2. Catalyzes the decarboxylation of orotidine 5'-monophosphate (OMP) to uridine 5'-monophosphate (UMP). In Laribacter hongkongensis (strain HLHK9), this protein is Orotidine 5'-phosphate decarboxylase.